Reading from the N-terminus, the 229-residue chain is UPF0758 protein CA_C1241 (229 aa).

In terms of domain architecture, MPN spans 107 to 229 (KITSPKEAAN…YISLKEEGLL (123 aa)). Positions 178, 180, and 191 each coordinate Zn(2+). Positions 178–191 (HNHPSGDPKPSNED) match the JAMM motif motif.

It belongs to the UPF0758 family.

The polypeptide is UPF0758 protein CA_C1241 (Clostridium acetobutylicum (strain ATCC 824 / DSM 792 / JCM 1419 / IAM 19013 / LMG 5710 / NBRC 13948 / NRRL B-527 / VKM B-1787 / 2291 / W)).